The primary structure comprises 507 residues: Cytochrome P450 monooxygenase nodZ (507 aa).

Helical transmembrane passes span 1 to 21 (MITA…FSLL) and 205 to 225 (GFLH…PWFL). The N-linked (GlcNAc...) asparagine glycan is linked to asparagine 352. Cysteine 445 lines the heme pocket.

This sequence belongs to the cytochrome P450 family. The cofactor is heme.

The protein localises to the membrane. It participates in secondary metabolite biosynthesis. In terms of biological role, cytochrome P450 monooxygenase; part of the gene cluster that mediates the biosynthesis of the indole diterpenes nodulisporic acids (NA). Nodulisporic acid A (NAA) and its chemically modified derivatives are of particular significance because of their highly potent insecticidal activity against blood-feeding arthropods and lack of observable adverse effects on mammals, in particular the tremogenicity associated with the paspaline-derived IDTs is not observed. The geranylgeranyl diphosphate (GGPP) synthase ggs1, localized outside of the cluster, is proposed to catalyze the first step in nodulisporic acid biosynthesis via conversion of farnesyl pyrophosphate and isopentyl pyrophosphate into geranylgeranyl pyrophosphate (GGPP). Condensation of indole-3-glycerol phosphate with GGPP by the prenyl transferase nodC then forms 3-geranylgeranylindole (3-GGI). Epoxidation by the FAD-dependent monooxygenase nodM leads to a single-epoxidized-GGI that is substrate of the terpene cyclase nodB for cyclization to yield emindole SB. The terminal methyl carbon, C28, of emindole SB is then oxidized by the cytochrome P450 monooxygenase nodW to produce nodulisporic acid F (NAF), the pentacyclic core of NAA. NAF is converted to nodulisporic acid E (NAE) via prenylation. This step is probably performed by one of the indole diterpene prenyltransferases nodD1 or nodD2. Several oxidation steps performed by the FAD-linked oxidoreductase nodO and one of the cytochrome P450 monooxygenase nodR, nodX or nodZ further convert NAE to nodulisporic acid D (NAD). NAD is substrate of cytochrome P450 monooxygenase nodJ to produce the precursor of nodulisporic acid C (NAC), converted to NAC by one of the indole diterpene prenyltransferases nodD1 or nodD2. The FAD-dependent monooxygenase nodY2 then oxidizes NAC to nodulisporic acid B (NAB). Finally NAB is converted to NAA by one of the cytochrome P450 monooxygenases nodR, nodX or nodZ. The sequence is that of Cytochrome P450 monooxygenase nodZ from Hypoxylon pulicicidum.